Consider the following 238-residue polypeptide: ATP synthase subunit a (238 aa).

Transmembrane regions (helical) follow at residues 15-35 (IFNL…FVFI), 76-96 (YSLF…LGLM), 111-131 (PTAN…LTHI), 167-187 (LALR…LLLL), and 208-230 (AFSV…VYLG).

This sequence belongs to the ATPase A chain family. As to quaternary structure, F-type ATPases have 2 components, CF(1) - the catalytic core - and CF(0) - the membrane proton channel. CF(1) has five subunits: alpha(3), beta(3), gamma(1), delta(1), epsilon(1). CF(0) has three main subunits: a(1), b(2) and c(9-12). The alpha and beta chains form an alternating ring which encloses part of the gamma chain. CF(1) is attached to CF(0) by a central stalk formed by the gamma and epsilon chains, while a peripheral stalk is formed by the delta and b chains.

The protein resides in the cell membrane. In terms of biological role, key component of the proton channel; it plays a direct role in the translocation of protons across the membrane. This is ATP synthase subunit a from Streptococcus pneumoniae (strain ATCC BAA-255 / R6).